The sequence spans 222 residues: Recombination protein RecR (222 aa).

The C4-type zinc-finger motif lies at 57-72 (CPVCFNITDAERCDVC). The region spanning 80–173 (SVICVVEEPG…VVSRIAYGLP (94 aa)) is the Toprim domain. A disordered region spans residues 189 to 222 (ALSGRRRVSEPASPPPPRRNDEEQDGAPARPPSH).

The protein belongs to the RecR family.

May play a role in DNA repair. It seems to be involved in an RecBC-independent recombinational process of DNA repair. It may act with RecF and RecO. The polypeptide is Recombination protein RecR (Deinococcus geothermalis (strain DSM 11300 / CIP 105573 / AG-3a)).